The chain runs to 327 residues: Thioredoxin reductase (327 aa).

FAD is bound by residues 10–13 (SGPA), 39–40 (IA), Q44, N53, V86, C143, D286, and 293–295 (RQA). A disulfide bridge links C140 with C143.

Belongs to the class-II pyridine nucleotide-disulfide oxidoreductase family. As to quaternary structure, homodimer. Requires FAD as cofactor.

Its subcellular location is the cytoplasm. The catalysed reaction is [thioredoxin]-dithiol + NADP(+) = [thioredoxin]-disulfide + NADPH + H(+). Functionally, component of the thioredoxin-thioredoxin reductase system which may be involved in biosynthesis of penicillins and cephalosporins and may be important in determining the thiol-disulfide redox balance. This chain is Thioredoxin reductase (TRR1), found in Pneumocystis jirovecii (Human pneumocystis pneumonia agent).